Reading from the N-terminus, the 419-residue chain is Gamma-glutamyl phosphate reductase (419 aa).

The protein belongs to the gamma-glutamyl phosphate reductase family.

The protein resides in the cytoplasm. It carries out the reaction L-glutamate 5-semialdehyde + phosphate + NADP(+) = L-glutamyl 5-phosphate + NADPH + H(+). The protein operates within amino-acid biosynthesis; L-proline biosynthesis; L-glutamate 5-semialdehyde from L-glutamate: step 2/2. Catalyzes the NADPH-dependent reduction of L-glutamate 5-phosphate into L-glutamate 5-semialdehyde and phosphate. The product spontaneously undergoes cyclization to form 1-pyrroline-5-carboxylate. The polypeptide is Gamma-glutamyl phosphate reductase (Ruthia magnifica subsp. Calyptogena magnifica).